The sequence spans 194 residues: dTTP/UTP pyrophosphatase (194 aa).

The Proton acceptor role is filled by D73.

This sequence belongs to the Maf family. YhdE subfamily. It depends on a divalent metal cation as a cofactor.

The protein localises to the cytoplasm. It carries out the reaction dTTP + H2O = dTMP + diphosphate + H(+). It catalyses the reaction UTP + H2O = UMP + diphosphate + H(+). In terms of biological role, nucleoside triphosphate pyrophosphatase that hydrolyzes dTTP and UTP. May have a dual role in cell division arrest and in preventing the incorporation of modified nucleotides into cellular nucleic acids. This is dTTP/UTP pyrophosphatase from Clostridium botulinum (strain Kyoto / Type A2).